Reading from the N-terminus, the 73-residue chain is U3-agatoxin-Ao1j (73 aa).

An N-terminal signal peptide occupies residues 1-20 (MRTIISLLLLSAMVFAVIEA). A propeptide spanning residues 21-34 (ISLEEGLQLFEGER) is cleaved from the precursor. Disulfide bonds link cysteine 36–cysteine 52, cysteine 43–cysteine 57, cysteine 51–cysteine 67, and cysteine 59–cysteine 65. Serine 71 carries the post-translational modification Serine amide.

The protein belongs to the neurotoxin 07 (Beta/delta-agtx) family. 03 (aga-4) subfamily. Aga sub-subfamily. In terms of tissue distribution, expressed by the venom gland.

The protein localises to the secreted. Functionally, insecticidal neurotoxin that induces an irreversible spastic paralysis when injected into insects. Modifies presynaptic voltage-gated sodium channels (Nav), causing them to open at the normal resting potential of the nerve. This leads to spontaneous release of neurotransmitter and repetitive action potentials in motor neurons. This is U3-agatoxin-Ao1j from Agelena orientalis (Funnel-web spider).